The chain runs to 107 residues: Phosphoribosyl-ATP pyrophosphatase (107 aa).

The protein belongs to the PRA-PH family.

Its subcellular location is the cytoplasm. It carries out the reaction 1-(5-phospho-beta-D-ribosyl)-ATP + H2O = 1-(5-phospho-beta-D-ribosyl)-5'-AMP + diphosphate + H(+). Its pathway is amino-acid biosynthesis; L-histidine biosynthesis; L-histidine from 5-phospho-alpha-D-ribose 1-diphosphate: step 2/9. The polypeptide is Phosphoribosyl-ATP pyrophosphatase (Methylobacterium radiotolerans (strain ATCC 27329 / DSM 1819 / JCM 2831 / NBRC 15690 / NCIMB 10815 / 0-1)).